The following is a 226-amino-acid chain: Prolactin (226 aa).

Positions 1 to 29 (MNSQGSAQKAGTLLLLLISNLLFCQNVQP) are cleaved as a signal peptide. A disulfide bond links Cys33 and Cys38. Residues Ser53 and Ser117 each carry the phosphoserine modification. Disulfide bonds link Cys85–Cys201 and Cys218–Cys226.

This sequence belongs to the somatotropin/prolactin family. In terms of assembly, interacts with PRLR.

The protein resides in the secreted. Functionally, prolactin acts primarily on the mammary gland by promoting lactation. The protein is Prolactin (Prl) of Mus musculus (Mouse).